Here is a 281-residue protein sequence, read N- to C-terminus: tRNA dimethylallyltransferase (281 aa).

2 interaction with substrate tRNA regions span residues 13–16 (DSAQ) and 133–137 (QRITR).

It belongs to the IPP transferase family. In terms of assembly, monomer. The cofactor is Mg(2+).

The catalysed reaction is adenosine(37) in tRNA + dimethylallyl diphosphate = N(6)-dimethylallyladenosine(37) in tRNA + diphosphate. Catalyzes the transfer of a dimethylallyl group onto the adenine at position 37 in tRNAs that read codons beginning with uridine, leading to the formation of N6-(dimethylallyl)adenosine (i(6)A). The polypeptide is tRNA dimethylallyltransferase (Novosphingobium aromaticivorans (strain ATCC 700278 / DSM 12444 / CCUG 56034 / CIP 105152 / NBRC 16084 / F199)).